The sequence spans 328 residues: Phenylalanine--tRNA ligase alpha subunit (328 aa).

Position 245 (glutamate 245) interacts with Mg(2+).

Belongs to the class-II aminoacyl-tRNA synthetase family. Phe-tRNA synthetase alpha subunit type 1 subfamily. As to quaternary structure, tetramer of two alpha and two beta subunits. Mg(2+) serves as cofactor.

It is found in the cytoplasm. The catalysed reaction is tRNA(Phe) + L-phenylalanine + ATP = L-phenylalanyl-tRNA(Phe) + AMP + diphosphate + H(+). The protein is Phenylalanine--tRNA ligase alpha subunit of Helicobacter pylori (strain HPAG1).